A 542-amino-acid chain; its full sequence is Hydroxylamine reductase (542 aa).

4 residues coordinate [4Fe-4S] cluster: cysteine 3, cysteine 6, cysteine 15, and cysteine 21. Residues histidine 243, glutamate 267, cysteine 311, cysteine 398, cysteine 426, cysteine 451, glutamate 485, and lysine 487 each contribute to the hybrid [4Fe-2O-2S] cluster site. Position 398 is a cysteine persulfide (cysteine 398).

Belongs to the HCP family. [4Fe-4S] cluster is required as a cofactor. The cofactor is hybrid [4Fe-2O-2S] cluster.

The protein localises to the cytoplasm. It carries out the reaction A + NH4(+) + H2O = hydroxylamine + AH2 + H(+). Its function is as follows. Catalyzes the reduction of hydroxylamine to form NH(3) and H(2)O. The sequence is that of Hydroxylamine reductase from Syntrophobacter fumaroxidans (strain DSM 10017 / MPOB).